Reading from the N-terminus, the 258-residue chain is Type III pantothenate kinase (258 aa).

Position 6–13 (6–13 (DVGNSDTV)) interacts with ATP. 108–111 (GSDR) lines the substrate pocket. The active-site Proton acceptor is Asp-110. Asp-130 serves as a coordination point for K(+). Residue Thr-133 participates in ATP binding. Thr-185 provides a ligand contact to substrate.

This sequence belongs to the type III pantothenate kinase family. As to quaternary structure, homodimer. The cofactor is NH4(+). K(+) serves as cofactor.

The protein resides in the cytoplasm. The enzyme catalyses (R)-pantothenate + ATP = (R)-4'-phosphopantothenate + ADP + H(+). Its pathway is cofactor biosynthesis; coenzyme A biosynthesis; CoA from (R)-pantothenate: step 1/5. In terms of biological role, catalyzes the phosphorylation of pantothenate (Pan), the first step in CoA biosynthesis. In Thermobifida fusca (strain YX), this protein is Type III pantothenate kinase.